Consider the following 367-residue polypeptide: MSNEADLLHGPLEDRHRDLGASFAEFGGWLMPVSYAGTVSEHNATRNAVGLFDVSHLGKALVRGTGAARFVNSALTNDLNRIGPGKAQYTLCCNESGGVIDDLIAYYVDDDEIFLVPNAANTAAVVEALQGAAPAGVTVRNLHRSYAVLAVQGPRSANVLAELGLPSDMDYMAYADTSFRQVPVRVCRTGYTGEHGYELLPPWESAGVVFDALAAAVSQAGGQPAGLGARDTLRTEMGYPLHGHELSPDISPLQARCGWAIGWKKEAFFGRDALLAEKEAGPRRLLRGLRMVGRGVLRAGLTVLVGDTPVGVTTSGTFSPTLQAGIALALINTDADVRDGQEVTVDVRGRAATCEVVRPPFVAVKTR.

Belongs to the GcvT family. As to quaternary structure, the glycine cleavage system is composed of four proteins: P, T, L and H.

The enzyme catalyses N(6)-[(R)-S(8)-aminomethyldihydrolipoyl]-L-lysyl-[protein] + (6S)-5,6,7,8-tetrahydrofolate = N(6)-[(R)-dihydrolipoyl]-L-lysyl-[protein] + (6R)-5,10-methylene-5,6,7,8-tetrahydrofolate + NH4(+). Functionally, the glycine cleavage system catalyzes the degradation of glycine. This chain is Aminomethyltransferase, found in Mycolicibacterium paratuberculosis (strain ATCC BAA-968 / K-10) (Mycobacterium paratuberculosis).